A 341-amino-acid polypeptide reads, in one-letter code: UDP-glucose 4-epimerase (341 aa).

It belongs to the polysaccharide synthase family.

It catalyses the reaction UDP-alpha-D-glucose = UDP-alpha-D-galactose. Epimerizes UDP-galactose to UDP-glucose. This Rickettsia typhi (strain ATCC VR-144 / Wilmington) protein is UDP-glucose 4-epimerase (capD).